We begin with the raw amino-acid sequence, 405 residues long: Acetylornithine aminotransferase (405 aa).

Residues 107–108 (GA) and phenylalanine 140 contribute to the pyridoxal 5'-phosphate site. Residue arginine 143 coordinates N(2)-acetyl-L-ornithine. 225–228 (DEVQ) provides a ligand contact to pyridoxal 5'-phosphate. The residue at position 254 (lysine 254) is an N6-(pyridoxal phosphate)lysine. Serine 282 serves as a coordination point for N(2)-acetyl-L-ornithine. Threonine 283 serves as a coordination point for pyridoxal 5'-phosphate.

Belongs to the class-III pyridoxal-phosphate-dependent aminotransferase family. ArgD subfamily. In terms of assembly, homodimer. It depends on pyridoxal 5'-phosphate as a cofactor.

Its subcellular location is the cytoplasm. It carries out the reaction N(2)-acetyl-L-ornithine + 2-oxoglutarate = N-acetyl-L-glutamate 5-semialdehyde + L-glutamate. It participates in amino-acid biosynthesis; L-arginine biosynthesis; N(2)-acetyl-L-ornithine from L-glutamate: step 4/4. This chain is Acetylornithine aminotransferase, found in Shewanella oneidensis (strain ATCC 700550 / JCM 31522 / CIP 106686 / LMG 19005 / NCIMB 14063 / MR-1).